The primary structure comprises 493 residues: Lysine--tRNA ligase (493 aa).

Positions 406 and 413 each coordinate Mg(2+).

This sequence belongs to the class-II aminoacyl-tRNA synthetase family. Homodimer. It depends on Mg(2+) as a cofactor.

The protein resides in the cytoplasm. It carries out the reaction tRNA(Lys) + L-lysine + ATP = L-lysyl-tRNA(Lys) + AMP + diphosphate. This Leuconostoc citreum (strain KM20) protein is Lysine--tRNA ligase.